The chain runs to 161 residues: UPF0178 protein BOV_1904 (161 aa).

This sequence belongs to the UPF0178 family.

The polypeptide is UPF0178 protein BOV_1904 (Brucella ovis (strain ATCC 25840 / 63/290 / NCTC 10512)).